A 65-amino-acid chain; its full sequence is Large ribosomal subunit protein bL35 (65 aa).

The disordered stretch occupies residues 1–65 (MPKMKTNRAA…GRLDRMLPYL (65 aa)). Residues 10–44 (AAKRFRKTASGKYKAGHANRSHILTKKATKRKRNL) are compositionally biased toward basic residues. Over residues 50-65 (VRAEDAGRLDRMLPYL) the composition is skewed to basic and acidic residues.

The protein belongs to the bacterial ribosomal protein bL35 family.

The polypeptide is Large ribosomal subunit protein bL35 (Xylella fastidiosa (strain M12)).